Reading from the N-terminus, the 833-residue chain is Mannosyl-oligosaccharide glucosidase (833 aa).

Over 1-10 (MLISKSKMFK) the chain is Cytoplasmic. Residues 11 to 28 (TFWILTSIVLLASATVDI) form a helical; Signal-anchor for type II membrane protein membrane-spanning segment. At 29–833 (SKLQEFEEYQ…ALVVNILGRF (805 aa)) the chain is on the lumenal side. Substrate contacts are provided by asparagine 42 and asparagine 122. N-linked (GlcNAc...) asparagine glycans are attached at residues asparagine 42, asparagine 122, and asparagine 135. A substrate-binding site is contributed by glutamate 143. The active-site Proton donor is the aspartate 601. Cysteine 669 and cysteine 685 are disulfide-bonded. Asparagine 787 carries an N-linked (GlcNAc...) asparagine glycan. Glutamate 804 (proton acceptor) is an active-site residue.

Belongs to the glycosyl hydrolase 63 family. Post-translationally, N-glycosylated.

The protein resides in the endoplasmic reticulum membrane. The enzyme catalyses N(4)-(alpha-D-Glc-(1-&gt;2)-alpha-D-Glc-(1-&gt;3)-alpha-D-Glc-(1-&gt;3)-alpha-D-Man-(1-&gt;2)-alpha-D-Man-(1-&gt;2)-alpha-D-Man-(1-&gt;3)-[alpha-D-Man-(1-&gt;2)-alpha-D-Man-(1-&gt;3)-[alpha-D-Man-(1-&gt;2)-alpha-D-Man-(1-&gt;6)]-alpha-D-Man-(1-&gt;6)]-beta-D-Man-(1-&gt;4)-beta-D-GlcNAc-(1-&gt;4)-beta-D-GlcNAc)-L-asparaginyl-[protein] + H2O = N(4)-(alpha-D-Glc-(1-&gt;3)-alpha-D-Glc-(1-&gt;3)-alpha-D-Man-(1-&gt;2)-alpha-D-Man-(1-&gt;2)-alpha-D-Man-(1-&gt;3)-[alpha-D-Man-(1-&gt;2)-alpha-D-Man-(1-&gt;3)-[alpha-D-Man-(1-&gt;2)-alpha-D-Man-(1-&gt;6)]-alpha-D-Man-(1-&gt;6)]-beta-D-Man-(1-&gt;4)-beta-D-GlcNAc-(1-&gt;4)-beta-D-GlcNAc)-L-asparaginyl-[protein] + beta-D-glucose. It participates in glycan metabolism; N-glycan degradation. Miglitol is an effective inhibitor at 1 mM. Functionally, cleaves the distal alpha 1,2-linked glucose residue from the Glc(3)Man(9)GlcNAc(2) oligosaccharide precursor highly specifically. Seems to play a role in beta-1,6-glucan synthesis. This chain is Mannosyl-oligosaccharide glucosidase (CWH41), found in Saccharomyces cerevisiae (strain ATCC 204508 / S288c) (Baker's yeast).